Here is a 225-residue protein sequence, read N- to C-terminus: 7-cyano-7-deazaguanine synthase (225 aa).

10 to 20 contacts ATP; it reads VSGGLDSTTVI. Residues C189, C199, C202, and C205 each contribute to the Zn(2+) site.

Belongs to the QueC family. The cofactor is Zn(2+).

It carries out the reaction 7-carboxy-7-deazaguanine + NH4(+) + ATP = 7-cyano-7-deazaguanine + ADP + phosphate + H2O + H(+). It functions in the pathway purine metabolism; 7-cyano-7-deazaguanine biosynthesis. Functionally, catalyzes the ATP-dependent conversion of 7-carboxy-7-deazaguanine (CDG) to 7-cyano-7-deazaguanine (preQ(0)). In Cellvibrio japonicus (strain Ueda107) (Pseudomonas fluorescens subsp. cellulosa), this protein is 7-cyano-7-deazaguanine synthase.